A 361-amino-acid chain; its full sequence is MAAAGAASNPGGGPEMVRGQAFDVGPRYINLAYIGEGAYGMVCSAHDNVNKVRVAIKKISPFEHQTYCQRTLREIKILLRFKHENIIGINDIIRAPTIEQMKDVYIVQDLMETDLYKLLKTQHLSNDHICYFLYQILRGLKYIHSANVLHRDLKPSNLLLNTTCDLKICDFGLARVADPDHDHTGFLTEYVATRWYRAPEIMLNSKGYTKSIDIWSVGCILAEMLSNRPIFPGKHYLDQLNHILGILGSPSQEDLNCIINLKARNYLLSLPHKNKVPWNRLFPNADPKALDLLDKMLTFNPHKRIEVEAALAHPYLEQYYDPSDEPVAEAPFKFEMELDDLPKETLKELIFEETARFQPGY.

One can recognise a Protein kinase domain in the interval 28–316; that stretch reads YINLAYIGEG…VEAALAHPYL (289 aa). Residues 34 to 42 and K57 contribute to the ATP site; that span reads IGEGAYGMV. D152 serves as the catalytic Proton acceptor. T188 bears the Phosphothreonine mark. A TXY motif is present at residues 188–190; that stretch reads TEY. Y190 is subject to Phosphotyrosine.

It belongs to the protein kinase superfamily. CMGC Ser/Thr protein kinase family. MAP kinase subfamily. Interacts with CDK2AP2. The cofactor is Mg(2+). In terms of processing, dually phosphorylated on Thr-188 and Tyr-190, which activates the enzyme. Expressed in the central nervous system, kidney, liver, intestine and the hematopoietic system. Also found in heart, muscle, pancreas and lung.

Its subcellular location is the cytoplasm. It is found in the cytoskeleton. It localises to the microtubule organizing center. The protein localises to the centrosome. The protein resides in the spindle. It catalyses the reaction L-seryl-[protein] + ATP = O-phospho-L-seryl-[protein] + ADP + H(+). The enzyme catalyses L-threonyl-[protein] + ATP = O-phospho-L-threonyl-[protein] + ADP + H(+). Its activity is regulated as follows. Activated by tyrosine phosphorylation during the M phase of the meiotic cell cycle. Dephosphorylated and inactivated by DUSP1. Serine/threonine kinase which acts as an essential component of the MAP kinase signal transduction pathway. Plays an important role in the MAPK/ERK cascade. Depending on the cellular context, this cascade mediates diverse biological functions such as cell growth, adhesion, survival and differentiation through the regulation of transcription, translation, cytoskeletal rearrangements. The MAPK/ERK cascade also plays a role in initiation and regulation of meiosis, mitosis, and postmitotic functions in differentiated cells by phosphorylating a number of transcription factors. Many of the substrates are localized in the nucleus, and seem to participate in the regulation of transcription upon stimulation. However, other substrates are found in the cytosol as well as in other cellular organelles, and those are responsible for processes such as translation, mitosis and apoptosis. Moreover, the MAPK/ERK cascade is also involved in the regulation of the endosomal dynamics, including lysosome processing and endosome cycling through the perinuclear recycling compartment (PNRC); as well as in the fragmentation of the Golgi apparatus during mitosis. Phosphorylates microtubule-associated protein 2 (MAP2), myelin basic protein (MBP) and Elk-1. Phosphorylates dual specificity protein phosphatase 1 (DUSP1) during meiosis, increasing its stability. Activated by M phase promoting factor (MPF). Plays a role in the spindle assembly checkpoint. The polypeptide is Mitogen-activated protein kinase 1 (mapk1) (Xenopus laevis (African clawed frog)).